Reading from the N-terminus, the 240-residue chain is 1-acyl-sn-glycerol-3-phosphate acyltransferase (240 aa).

Positions 73 to 78 match the HXXXXD motif motif; that stretch reads HQNNYD.

It belongs to the 1-acyl-sn-glycerol-3-phosphate acyltransferase family.

It localises to the cell inner membrane. The catalysed reaction is a 1-acyl-sn-glycero-3-phosphate + an acyl-CoA = a 1,2-diacyl-sn-glycero-3-phosphate + CoA. It participates in phospholipid metabolism; CDP-diacylglycerol biosynthesis; CDP-diacylglycerol from sn-glycerol 3-phosphate: step 2/3. Converts lysophosphatidic acid (LPA) into phosphatidic acid by incorporating acyl moiety at the 2 position. This Haemophilus influenzae (strain ATCC 51907 / DSM 11121 / KW20 / Rd) protein is 1-acyl-sn-glycerol-3-phosphate acyltransferase (plsC).